We begin with the raw amino-acid sequence, 180 residues long: Small ribosomal subunit protein bS18 (180 aa).

Disordered regions lie at residues 1 to 26 (MKNKLKKKKNPKGTKKIKAKAKAHKV) and 53 to 82 (YSDKESYSDKESYSDKESYSDKESYSDKES).

Belongs to the bacterial ribosomal protein bS18 family. Part of the 30S ribosomal subunit. Forms a tight heterodimer with protein bS6.

In terms of biological role, binds as a heterodimer with protein bS6 to the central domain of the 16S rRNA, where it helps stabilize the platform of the 30S subunit. This is Small ribosomal subunit protein bS18 from Karelsulcia muelleri (strain GWSS) (Sulcia muelleri).